The chain runs to 466 residues: MRKFMDEDFLLTNETAVKLYHQYAKDMSIYDFHCHLSPKEIYEDRRFKNITEVWLYGDHYKWRLMRANGIDEKYITGDADDYEKFVAYAKTIPMAIGNPVYHWTHLELQRYFGIYDLLNEKTAKSIWERANEVISQEDFSARNILKKSNVKVVITTDDPVDSLEYHIKLKEEKDFDIKVLPAFRPDKGLNIEKDDFLSWIKKLESASGIKITTYDDFLQALEKRIEFFHSVGCRISDHALDYVFYQKTSKQEAEKVFKKVLTEQHLTKEEIDSFKTYTMIFLGKKYAELNWVMQLHIGAMRNNNTKMYRILGPDTGYDSIGDFPIAYSLSRLLDSLEIEGALPKTILYTLNPAANYVIATMIGNFQDGKIAGKMQFGAAWWFNDNKDGIKEQLKTLANVGLLGRFVGMVTDSRSFLSYARHEYFRRILCDLIGEWVENGEVPNDIELLGKIVQDISFNNAKEYMGV.

The protein belongs to the metallo-dependent hydrolases superfamily. Uronate isomerase family.

The catalysed reaction is D-glucuronate = D-fructuronate. The enzyme catalyses aldehydo-D-galacturonate = keto-D-tagaturonate. Its pathway is carbohydrate metabolism; pentose and glucuronate interconversion. The protein is Uronate isomerase of Caldanaerobacter subterraneus subsp. tengcongensis (strain DSM 15242 / JCM 11007 / NBRC 100824 / MB4) (Thermoanaerobacter tengcongensis).